The primary structure comprises 449 residues: Packaging protein 1 (449 aa).

The interval 1 to 78 (METRGRRPAA…PAKRGDMLDR (78 aa)) is disordered. Residue 171–178 (GPTGCGKS) coordinates ATP. Positions 440–449 (RAYRARKTPK) are DNA-binding.

This sequence belongs to the adenoviridae packaging protein 1 family. In terms of assembly, homodimer. Part of a genome packaging complex composed of packaging proteins 1, 2 and 3; this complex specifically binds to the packaging sequence on the left end of viral genomic DNA and performs packaging of the viral genome. Interacts with protein 33K.

It localises to the virion. The protein resides in the host nucleus. The protein localises to the host nucleoplasm. Its subcellular location is the host nucleolus. Functionally, component of the packaging machinery which encapsidates the viral DNA into preformed capsids and transcriptional activator of the viral major late promoter (MLP). Binds, along with packaging proteins 2 and 3, to the specific packaging sequence on the left end of viral genomic DNA and displays ATPase activity thereby providing the power stroke of the packaging machinery. The activity of packaging protein IVa2 is stimulated by protein 33K which acts as a terminase. May be the protein that pumps DNA into the capsid powered by ATP hydrolysis. Specifically binds to the 5'-CG-3' nucleotides of the repeats making up the packaging sequence. Component of the DEF-A and DEF-B transcription factors that bind downstream elements of the major late promoter (MLP), and stimulate transcription from the MLP after initiation of viral DNA replication. DEF-A is a heterodimer packaging proteins 1 and 2 and DEF-B is a homodimer of packaging protein 1. The chain is Packaging protein 1 from Human adenovirus C serotype 5 (HAdV-5).